A 90-amino-acid polypeptide reads, in one-letter code: Chaplin-G (90 aa).

The N-terminal stretch at 1-27 (MSRIAKAAGVALGTGAVVLSGTGMAMA) is a signal peptide. The Chaplin domain occupies 38-78 (SPGVLSGNVVQVPVHVPVNLCGNTIDVIGLLNPAFGNACEN). Residues Cys-58 and Cys-76 are joined by a disulfide bond.

This sequence belongs to the chaplin family. Short chaplin subfamily.

It is found in the cell surface. The protein localises to the secreted. Its subcellular location is the cell wall. One of 8 partially redundant surface-active proteins required for efficient formation of aerial mycelium; the short chaplins assemble into a hydrophobic, amyloidal fibrillar surface layer that envelopes and protects aerial hyphae and spores, presumably anchored to the long chaplins. Chaplins have an overlapping function with the surface-active SapB peptide; chaplins are essential on minimal medium while on rich medium both chaplins and SapB are required for efficient aerial hyphae formation. Chaplins are also involved in cell attachment to a hydrophobic surface. Forms amyloid fibrils in vitro probably composed of stacked beta-sheets, at low extracellular concentrations individually restores the ability to form aerial hyphae to a chaplin-deficient strain. A small chaplin extract (ChpD, ChpE, ChpF, ChpG and ChpH) self-assembles into 2 different amyloids; small fibrils at the air-water interface form an amphipathic membrane that resembles spore-surface structures involved in aerial hyphae formation, and hydrophilic fibrils in solution that resemble the fibers that attach cells to a hydrophobic surface. At the air-water interface the hydrophilic surface is in contact with water (probably equivalent to the peptidoglycan layer), while the hydrophobic face is exposed to the air, making the surface of the aerial hyphae hydrophobic. A small chaplin extract applied to a chaplin-deficient strain restores aerial hyphae formation. The small chaplin extract forms an amyloid-like structure similar to that seen on the surface of cells without rodlets (rdlA-rdlB deletions), and is highly surface active, reducing surface tension from 72 to 26 mJ/m(2), which probably allows escape of hyphae from an aqueous environment into air. ChpF and ChpG are sufficient to restore the rodlet layer and hydrophobicity to a strain deleted for the other 6 chaplin genes. The polypeptide is Chaplin-G (Streptomyces coelicolor (strain ATCC BAA-471 / A3(2) / M145)).